The following is a 98-amino-acid chain: Integration host factor subunit alpha (98 aa).

The tract at residues 49 to 71 (FGNFDLRDKNQRPGRNPKTGEDI) is disordered.

This sequence belongs to the bacterial histone-like protein family. In terms of assembly, heterodimer of an alpha and a beta chain.

This protein is one of the two subunits of integration host factor, a specific DNA-binding protein that functions in genetic recombination as well as in transcriptional and translational control. The protein is Integration host factor subunit alpha of Shewanella halifaxensis (strain HAW-EB4).